The following is a 424-amino-acid chain: MNRNIAVVGLGYVGLPVAVTFGNKHKVIGFDINESRIKELKNNYDRTNEVTENKLKNTNIEYTSNAEDLKKADFIIIAVPTPIDKHNKPDLLPLLKASETVGKVITPDTIVVYESTVYPGATEEECVPVLEKYSGLVCGKDFFVGYSPERINPGDKVHTFETITKVVSGQTLEVLEIVADVYSSVVTAGVHKASSIKVAEAAKVIENTQRDVNIALMNELAIIFDKLDIDTNEVLKASGTKWNFLNFKPGLVGGHCIGVDPYYLTHKAQEVGHHPEVILAGRRINDNMAKYIASNVIKELLKQGLEVQGATVNVLGLTFKENCPDLRNTKVIHIIEELKEYGLNVTVNDVEADKNEAKKFFGLDLIDTKELKMVDVVLFAVPHKDYMENKKDYINLVKDCGIVFDIKGIINSDELNVSQRLWRL.

This sequence belongs to the UDP-glucose/GDP-mannose dehydrogenase family.

It functions in the pathway capsule biogenesis; capsule polysaccharide biosynthesis. Its function is as follows. Required for the biosynthesis of type 1 capsular polysaccharide. This is Protein CapL (capL) from Staphylococcus aureus.